Consider the following 473-residue polypeptide: Monocarboxylate transporter 4 (473 aa).

Over 1–17 (MGAVVVDDGPSGVKAPD) the chain is Cytoplasmic. Residues 18 to 38 (GGWGWAVLFGCFIITGFSYAF) traverse the membrane as a helical segment. Residues 39 to 61 (PKAVSVFFKELIREFGVGYSDTA) lie on the Extracellular side of the membrane. The helical transmembrane segment at 62–82 (WISSILLAMLYGTGPLCSVCV) threads the bilayer. Over 83 to 91 (NRFGCRPVM) the chain is Cytoplasmic. A helical transmembrane segment spans residues 92 to 112 (LVGGLFASMGMVIASFCTSIV). The Extracellular segment spans residues 113-115 (QIY). Residues 116–136 (LTAGVITGLGLALNFQPSLIM) traverse the membrane as a helical segment. The Cytoplasmic segment spans residues 137-149 (LNRYFDKRRPLAN). The helical transmembrane segment at 150–170 (GLSAAGSPVFLCALSPLGQIL) threads the bilayer. At 171 to 179 (QHEYGWRGG) the chain is on the extracellular side. Residues 180–200 (FLILGGMLLNCCVCGALMRPL) form a helical membrane-spanning segment. Topologically, residues 201 to 231 (EPPKKSEATKEPAEKKAKKKLLDFSVFKDGG) are cytoplasmic. Residues 232–252 (FVIYTLAASIMVLGLFVPPVF) form a helical membrane-spanning segment. Residues 253 to 268 (VVSYAKDLGYQDTKAA) are Extracellular-facing. Residues 269 to 289 (FLLTILGFIDIFARPICGMVA) form a helical membrane-spanning segment. The Cytoplasmic portion of the chain corresponds to 290 to 297 (GLKWVRPR). Residues 298–318 (CVYLFSFAMIFNGFTDLMGSM) form a helical membrane-spanning segment. The Extracellular segment spans residues 319 to 321 (SVD). Residues 322 to 342 (YGGLVVFCIFFGISYGMVGAL) form a helical membrane-spanning segment. The Cytoplasmic portion of the chain corresponds to 343 to 358 (QFEVLMAIVGTQKFSS). The helical transmembrane segment at 359-379 (AIGLVLLAEAMAVLIGPPSAG) threads the bilayer. At 380-388 (KLLDLTRRY) the chain is on the extracellular side. A helical transmembrane segment spans residues 389-409 (MFVFIIAGIEVTTSALVLALG). The Cytoplasmic portion of the chain corresponds to 410-473 (NFFCIKKKPA…EVVTNPETCV (64 aa)). Positions 421–447 (PHTKEAAAEREELNKSEDKTPEDAKVD) are disordered. Basolateral sorting signal stretches follow at residues 427–449 (AAER…VDSI) and 449–473 (IEVE…ETCV).

The protein belongs to the major facilitator superfamily. Monocarboxylate porter (TC 2.A.1.13) family. In terms of assembly, interacts with BSG; interaction mediates SLC16A3 targeting to the plasma membrane.

It is found in the cell membrane. It localises to the basolateral cell membrane. The enzyme catalyses (S)-lactate(in) + H(+)(in) = (S)-lactate(out) + H(+)(out). It catalyses the reaction pyruvate(out) + H(+)(out) = pyruvate(in) + H(+)(in). In terms of biological role, proton-dependent transporter of monocarboxylates such as L-lactate and pyruvate. Plays a predominant role in the L-lactate efflux from highly glycolytic cells. This chain is Monocarboxylate transporter 4 (SLC16A3), found in Gallus gallus (Chicken).